We begin with the raw amino-acid sequence, 312 residues long: Malate dehydrogenase (312 aa).

NAD(+) is bound by residues 7-13 (GAAGGIG) and Asp34. Substrate-binding residues include Arg81 and Arg87. NAD(+) contacts are provided by residues Asn94 and 117–119 (ITN). 2 residues coordinate substrate: Asn119 and Arg153. His177 acts as the Proton acceptor in catalysis. Met227 is an NAD(+) binding site.

This sequence belongs to the LDH/MDH superfamily. MDH type 1 family. Homodimer.

It carries out the reaction (S)-malate + NAD(+) = oxaloacetate + NADH + H(+). In terms of biological role, catalyzes the reversible oxidation of malate to oxaloacetate. In Yersinia pseudotuberculosis serotype O:1b (strain IP 31758), this protein is Malate dehydrogenase.